Reading from the N-terminus, the 145-residue chain is D-aminoacyl-tRNA deacylase (145 aa).

The Gly-cisPro motif, important for rejection of L-amino acids signature appears at 137 to 138; that stretch reads GP.

This sequence belongs to the DTD family. As to quaternary structure, homodimer.

It is found in the cytoplasm. It catalyses the reaction glycyl-tRNA(Ala) + H2O = tRNA(Ala) + glycine + H(+). It carries out the reaction a D-aminoacyl-tRNA + H2O = a tRNA + a D-alpha-amino acid + H(+). In terms of biological role, an aminoacyl-tRNA editing enzyme that deacylates mischarged D-aminoacyl-tRNAs. Also deacylates mischarged glycyl-tRNA(Ala), protecting cells against glycine mischarging by AlaRS. Acts via tRNA-based rather than protein-based catalysis; rejects L-amino acids rather than detecting D-amino acids in the active site. By recycling D-aminoacyl-tRNA to D-amino acids and free tRNA molecules, this enzyme counteracts the toxicity associated with the formation of D-aminoacyl-tRNA entities in vivo and helps enforce protein L-homochirality. The chain is D-aminoacyl-tRNA deacylase from Proteus mirabilis (strain HI4320).